The primary structure comprises 389 residues: Probable peptide chain release factor 1, mitochondrial (389 aa).

Q259 is subject to N5-methylglutamine.

This sequence belongs to the prokaryotic/mitochondrial release factor family. Post-translationally, methylation of glutamine in the GGQ triplet is conserved from bacteria to mammals.

It is found in the mitochondrion. In terms of biological role, mitochondrial peptide chain release factor that directs the termination of translation in response to the peptide chain termination codons UAA and UAG. The chain is Probable peptide chain release factor 1, mitochondrial from Caenorhabditis elegans.